The sequence spans 143 residues: Crossover junction endodeoxyribonuclease Hjc (143 aa).

Mg(2+) is bound at residue E12. The active site involves S32. Residues D42 and E55 each contribute to the Mg(2+) site.

Belongs to the Holliday junction resolvase Hjc family. Homodimer. Interacts with PCNA subunit PCNA1. Requires Mg(2+) as cofactor.

The catalysed reaction is Endonucleolytic cleavage at a junction such as a reciprocal single-stranded crossover between two homologous DNA duplexes (Holliday junction).. With respect to regulation, autoinhibits at very high concentrations, possibly because of extreme junction distortion. Inhibition (and activity at low concentrations of enzyme) is stimulated by dsDNA and Sso7d. Activity stimulated by PCNA subunit PCNA1. Functionally, a structure-specific endonuclease that resolves Holliday junction (HJ) intermediates during genetic recombination; may have some degree of sequence preference in a mobile junction. Cleaves 4-way DNA junctions introducing paired nicks in opposing strands, leaving a 5'-terminal phosphate and a 3'-terminal hydroxyl group that are subsequently ligated to produce recombinant products. Can cleave all 4 strands 3 bases 3' of the junction center. Cleaves both mobile and immobile junctions. Modifies the structure of the 4-way DNA junction, a model Holliday junction structure. The protein forms multiple complexes with 4-way DNA, suggesting more than 1 homodimer can bind to each junction. In Saccharolobus solfataricus (strain ATCC 35092 / DSM 1617 / JCM 11322 / P2) (Sulfolobus solfataricus), this protein is Crossover junction endodeoxyribonuclease Hjc.